We begin with the raw amino-acid sequence, 258 residues long: Lipoprotein-releasing system ATP-binding protein LolD (258 aa).

An ABC transporter domain is found at 5 to 244 (LQCCQLSKSY…PTSSITDPAN (240 aa)). 41–48 (GSSGCGKS) lines the ATP pocket. The interval 222 to 258 (LRPLSDNSEQALPPTSSITDPANNIKDNEPQANERHV) is disordered. Over residues 226–243 (SDNSEQALPPTSSITDPA) the composition is skewed to polar residues. A compositionally biased stretch (basic and acidic residues) spans 247-258 (KDNEPQANERHV).

The protein belongs to the ABC transporter superfamily. Lipoprotein translocase (TC 3.A.1.125) family. In terms of assembly, the complex is composed of two ATP-binding proteins (LolD) and two transmembrane proteins (LolC and LolE).

The protein localises to the cell inner membrane. In terms of biological role, part of the ABC transporter complex LolCDE involved in the translocation of mature outer membrane-directed lipoproteins, from the inner membrane to the periplasmic chaperone, LolA. Responsible for the formation of the LolA-lipoprotein complex in an ATP-dependent manner. The chain is Lipoprotein-releasing system ATP-binding protein LolD from Colwellia psychrerythraea (strain 34H / ATCC BAA-681) (Vibrio psychroerythus).